The following is a 185-amino-acid chain: Ribosome-recycling factor (185 aa).

Belongs to the RRF family.

It is found in the cytoplasm. Functionally, responsible for the release of ribosomes from messenger RNA at the termination of protein biosynthesis. May increase the efficiency of translation by recycling ribosomes from one round of translation to another. This is Ribosome-recycling factor from Bacillus cytotoxicus (strain DSM 22905 / CIP 110041 / 391-98 / NVH 391-98).